An 864-amino-acid polypeptide reads, in one-letter code: Paramyosin (864 aa).

The nonhelical region stretch occupies residues 1-30 (MSSLYRDLDSDVSSTRIVRHSYNVYRGSSP). The stretch at 31-853 (SSQNRLESRI…QTVRRSRSMS (823 aa)) forms a coiled coil. Positions 854–864 (VSREVTRVVRV) are nonhelical region.

It belongs to the paramyosin family. Homodimer. Post-translationally, phosphorylated. Most abundantly expressed in muscle tissues from byssus retractor and adductor muscles. Low expression in foot, gill, inner mantle and outer mantle.

The protein localises to the cytoplasm. The protein resides in the myofibril. Paramyosin is a major structural component of many thick filaments isolated from invertebrate muscles. The chain is Paramyosin from Mytilus galloprovincialis (Mediterranean mussel).